The sequence spans 520 residues: Phosphoenolpyruvate carboxykinase (ATP) (520 aa).

Residues Arg-61, Phe-196, and Lys-202 each contribute to the substrate site. Residues Lys-202, His-222, and 238-246 (GLSGTGKTT) contribute to the ATP site. 2 residues coordinate Mn(2+): Lys-202 and His-222. Asp-259 lines the Mn(2+) pocket. ATP is bound by residues Glu-287, Arg-324, 443–444 (RI), and Thr-449. Position 324 (Arg-324) interacts with substrate.

This sequence belongs to the phosphoenolpyruvate carboxykinase (ATP) family. Requires Mn(2+) as cofactor.

The protein localises to the cytoplasm. The catalysed reaction is oxaloacetate + ATP = phosphoenolpyruvate + ADP + CO2. It participates in carbohydrate biosynthesis; gluconeogenesis. Its function is as follows. Involved in the gluconeogenesis. Catalyzes the conversion of oxaloacetate (OAA) to phosphoenolpyruvate (PEP) through direct phosphoryl transfer between the nucleoside triphosphate and OAA. In Amoebophilus asiaticus (strain 5a2), this protein is Phosphoenolpyruvate carboxykinase (ATP).